Consider the following 151-residue polypeptide: Tetratricopeptide repeat protein 32 (151 aa).

TPR repeat units lie at residues serine 8–alanine 41, alanine 58–phenylalanine 91, and glutamate 92–phenylalanine 125.

The protein is Tetratricopeptide repeat protein 32 (TTC32) of Homo sapiens (Human).